Here is a 184-residue protein sequence, read N- to C-terminus: Large ribosomal subunit protein uL5 (184 aa).

Belongs to the universal ribosomal protein uL5 family. In terms of assembly, part of the 50S ribosomal subunit; part of the 5S rRNA/L5/L18/L25 subcomplex. Contacts the 5S rRNA and the P site tRNA. Forms a bridge to the 30S subunit in the 70S ribosome.

In terms of biological role, this is one of the proteins that bind and probably mediate the attachment of the 5S RNA into the large ribosomal subunit, where it forms part of the central protuberance. In the 70S ribosome it contacts protein S13 of the 30S subunit (bridge B1b), connecting the 2 subunits; this bridge is implicated in subunit movement. Contacts the P site tRNA; the 5S rRNA and some of its associated proteins might help stabilize positioning of ribosome-bound tRNAs. The chain is Large ribosomal subunit protein uL5 from Syntrophotalea carbinolica (strain DSM 2380 / NBRC 103641 / GraBd1) (Pelobacter carbinolicus).